The sequence spans 155 residues: Transcriptional repressor NrdR (155 aa).

The segment at cysteine 3–cysteine 34 is a zinc-finger region. The ATP-cone domain maps to leucine 49 to aspartate 139.

It belongs to the NrdR family. Requires Zn(2+) as cofactor.

Functionally, negatively regulates transcription of bacterial ribonucleotide reductase nrd genes and operons by binding to NrdR-boxes. This chain is Transcriptional repressor NrdR, found in Cereibacter sphaeroides (strain ATCC 17025 / ATH 2.4.3) (Rhodobacter sphaeroides).